The primary structure comprises 299 residues: Protease HtpX homolog (299 aa).

2 helical membrane passes run 14–34 (WLLLLVFFLLLGLVGYGVGNL) and 39–59 (GFGGLILALVIGFIYVVTMIF). His143 is a Zn(2+) binding site. Glu144 is a catalytic residue. His147 is a binding site for Zn(2+). Transmembrane regions (helical) follow at residues 153–173 (IRISTIAVALASAITMLAGMA) and 198–218 (IVFLILSLIAIILAPLAATLV). Position 227 (Glu227) interacts with Zn(2+).

It belongs to the peptidase M48B family. Requires Zn(2+) as cofactor.

The protein resides in the cell membrane. The polypeptide is Protease HtpX homolog (Streptococcus thermophilus (strain ATCC BAA-250 / LMG 18311)).